We begin with the raw amino-acid sequence, 343 residues long: MTQEKHNAAILGGGSFGTAMASILAANGHNVNLWVRDPETAAAINIDRENTRYLPGAELPKEVTATDSLEEALGGASMVFVAIPSKAFAEVLEQARQWVPDEAVVISCTKGIYADGFLLMSELLHQYWPHTRIGVLSGPNLAKEVVEQKFTGTVIASPDETLRQTVQNALSCDYFRVYDNPDIYGVELGGALKNIYAVASGMAAAIGVGENSRSFLITRALAEMSRFAVKLGANPMTFLGLSGVGDLIATCTSSLSRNYQVGFQLGEGKTLEQAIECLGQTAEGINTIKLVADKAAELDVYMPLATALYKIVYHGQPLELMIQNLMSGEYKHDVEFQLGAFTS.

Ser15, Phe16, Arg36, and Lys110 together coordinate NADPH. Sn-glycerol 3-phosphate contacts are provided by Lys110 and Gly138. Ala142 lines the NADPH pocket. The sn-glycerol 3-phosphate site is built by Lys193, Asp246, Ser256, Arg257, and Asn258. Residue Lys193 is the Proton acceptor of the active site. Arg257 lines the NADPH pocket. An NADPH-binding site is contributed by Glu283.

This sequence belongs to the NAD-dependent glycerol-3-phosphate dehydrogenase family.

It localises to the cytoplasm. The enzyme catalyses sn-glycerol 3-phosphate + NAD(+) = dihydroxyacetone phosphate + NADH + H(+). It catalyses the reaction sn-glycerol 3-phosphate + NADP(+) = dihydroxyacetone phosphate + NADPH + H(+). It functions in the pathway membrane lipid metabolism; glycerophospholipid metabolism. Functionally, catalyzes the reduction of the glycolytic intermediate dihydroxyacetone phosphate (DHAP) to sn-glycerol 3-phosphate (G3P), the key precursor for phospholipid synthesis. This is Glycerol-3-phosphate dehydrogenase [NAD(P)+] from Alcanivorax borkumensis (strain ATCC 700651 / DSM 11573 / NCIMB 13689 / SK2).